A 511-amino-acid polypeptide reads, in one-letter code: Aprataxin and PNK-like factor (511 aa).

Residues 1–108 (MSGGFELQPR…RILSIPSEVE (108 aa)) enclose the FHA-like domain. The residue at position 116 (serine 116) is a Phosphoserine; by ATM. Serine 149 bears the Phosphoserine mark. Positions 182 to 191 (RKRILPTWML) match the KBM motif. The segment at 223–370 (KSQLNTTQQG…ATDSVLQGSE (148 aa)) is disordered. 2 stretches are compositionally biased toward polar residues: residues 225–249 (QLNT…SAEQ) and 263–293 (STIS…NAQR). Residues 304–315 (VSKHKIATKRTP) are compositionally biased toward basic residues. The span at 324 to 344 (CSENCSSAQGDSLQDESQGSH) shows a compositional bias: polar residues. Positions 345-355 (SESSSNPSNPE) are enriched in low complexity. Arginine 376, tyrosine 381, tyrosine 386, and arginine 387 together coordinate a glycoprotein. Residues 377 to 398 (TSCMYGANCYRKNPVHFQHFSH) form a PBZ-type 1 zinc finger. Residues 406 to 416 (GVQIVGQDETD) are flexible linker. A PBZ-type 2 zinc finger spans residues 419–440 (PECPYGPSCYRKNPQHKIEYRH). Residues tyrosine 423, tyrosine 428, and arginine 429 each contribute to the a glycoprotein site. Residues 449–497 (LDEDNDNVGQPNEYDLNDSFLDDEEEDYEPTDEDSDWEPGKEDEEKEDV) are disordered. Residues 468-497 (FLDDEEEDYEPTDEDSDWEPGKEDEEKEDV) show a composition bias toward acidic residues. Residues 476–500 (YEPTDEDSDWEPGKEDEEKEDVEEL) carry the NAP1L motif motif. Residues 487–511 (PGKEDEEKEDVEELLKEAKRFMKRK) adopt a coiled-coil conformation.

This sequence belongs to the APLF family. In terms of assembly, interacts with LIG4. Interacts with PARP1. Interacts with XRCC4. Interacts (via KBM motif) with XRCC5 and XRCC6; promoting recruitment to DNA damage sites. Interacts with XRCC1. Interacts (via C-terminal disordered region) with histones; interacts with histone H2A, H2B and H3-H4. Poly-ADP-ribosylated. In addition to binding non covalently poly-ADP-ribose via its PBZ-type zinc fingers, the protein is also covalently poly-ADP-ribosylated by PARP1. In terms of processing, phosphorylated in an ATM-dependent manner upon double-strand DNA break.

The protein localises to the nucleus. The protein resides in the chromosome. It is found in the cytoplasm. It localises to the cytosol. Histone chaperone involved in single-strand and double-strand DNA break repair. Recruited to sites of DNA damage through interaction with branched poly-ADP-ribose chains, a polymeric post-translational modification synthesized transiently at sites of chromosomal damage to accelerate DNA strand break repair reactions. Following recruitment to DNA damage sites, acts as a histone chaperone that mediates histone eviction during DNA repair and promotes recruitment of histone variant MACROH2A1. Also has a nuclease activity: displays apurinic-apyrimidinic (AP) endonuclease and 3'-5' exonuclease activities in vitro. Also able to introduce nicks at hydroxyuracil and other types of pyrimidine base damage. Together with PARP3, promotes the retention of the LIG4-XRCC4 complex on chromatin and accelerate DNA ligation during non-homologous end-joining (NHEJ). Also acts as a negative regulator of cell pluripotency by promoting histone exchange. Required for the embryo implantation during the epithelial to mesenchymal transition in females. The protein is Aprataxin and PNK-like factor of Homo sapiens (Human).